A 464-amino-acid chain; its full sequence is Pup--protein ligase (464 aa).

E14 provides a ligand contact to Mg(2+). ATP is bound at residue R58. Y60 contacts Mg(2+). D62 serves as the catalytic Proton acceptor. E68 is a Mg(2+) binding site. ATP-binding residues include T71 and W430.

It belongs to the Pup ligase/Pup deamidase family. Pup-conjugating enzyme subfamily.

It catalyses the reaction ATP + [prokaryotic ubiquitin-like protein]-L-glutamate + [protein]-L-lysine = ADP + phosphate + N(6)-([prokaryotic ubiquitin-like protein]-gamma-L-glutamyl)-[protein]-L-lysine.. It participates in protein degradation; proteasomal Pup-dependent pathway. The protein operates within protein modification; protein pupylation. In terms of biological role, catalyzes the covalent attachment of the prokaryotic ubiquitin-like protein modifier Pup to the proteasomal substrate proteins, thereby targeting them for proteasomal degradation. This tagging system is termed pupylation. The ligation reaction involves the side-chain carboxylate of the C-terminal glutamate of Pup and the side-chain amino group of a substrate lysine. This chain is Pup--protein ligase, found in Micrococcus luteus (strain ATCC 4698 / DSM 20030 / JCM 1464 / CCM 169 / CCUG 5858 / IAM 1056 / NBRC 3333 / NCIMB 9278 / NCTC 2665 / VKM Ac-2230) (Micrococcus lysodeikticus).